Here is a 1154-residue protein sequence, read N- to C-terminus: DNA-directed RNA polymerase subunit beta (1154 aa).

Residues E1108 to G1123 are compositionally biased toward basic and acidic residues. The interval E1108 to E1136 is disordered. Acidic residues predominate over residues S1127–E1136.

Belongs to the RNA polymerase beta chain family. As to quaternary structure, the RNAP catalytic core consists of 2 alpha, 1 beta, 1 beta' and 1 omega subunit. When a sigma factor is associated with the core the holoenzyme is formed, which can initiate transcription.

It carries out the reaction RNA(n) + a ribonucleoside 5'-triphosphate = RNA(n+1) + diphosphate. In terms of biological role, DNA-dependent RNA polymerase catalyzes the transcription of DNA into RNA using the four ribonucleoside triphosphates as substrates. This Heliobacterium modesticaldum (strain ATCC 51547 / Ice1) protein is DNA-directed RNA polymerase subunit beta.